A 1461-amino-acid chain; its full sequence is Regulation of nuclear pre-mRNA domain-containing protein 2 (1461 aa).

A2 carries the post-translational modification N-acetylalanine. S16 carries the post-translational modification Phosphoserine. Residues 19–149 (SAGALESSLD…ALREALSTTF (131 aa)) form the CID domain. Disordered regions lie at residues 311 to 438 (STLP…TSLS) and 469 to 504 (NTGV…TTSH). Over residues 352-368 (ESEKSATPEPVTDNRDV) the composition is skewed to basic and acidic residues. The residue at position 356 (S356) is a Phosphoserine. A Phosphothreonine modification is found at T358. Positions 369–378 (EDMELSDVED) are enriched in acidic residues. At S374 the chain carries Phosphoserine. A compositionally biased stretch (basic and acidic residues) spans 379–394 (DGSKIIVEDRKEKPAE). The span at 397–416 (AVSTSVPTKPTENISKASSC) shows a compositional bias: polar residues. Low complexity-rich tracts occupy residues 417 to 426 (TPVPVTMTAT) and 473 to 491 (SPAS…NLTS). Residues S473, S476, and S479 each carry the phosphoserine modification. At T482 the chain carries Phosphothreonine. The residue at position 485 (S485) is a Phosphoserine. T517 carries the post-translational modification Phosphothreonine. Residues 547 to 623 (TGNPVPASEA…SPGLPSTTFK (77 aa)) form a disordered region. A compositionally biased stretch (low complexity) spans 553 to 566 (ASEAASQSTSASPA). Residue S564 is modified to Phosphoserine. A compositionally biased stretch (polar residues) spans 567 to 583 (NTTVSTIKGRNLPSSAQ). S593 is subject to Phosphoserine. Over residues 593–614 (SPNSSTSEVSSTSASKASIGQS) the composition is skewed to low complexity. T598 is subject to Phosphothreonine. S614, S663, S665, and S716 each carry phosphoserine. Disordered regions lie at residues 696-849 (GSSA…MMNL), 900-997 (SENC…EKVL), 1016-1102 (ASRK…SGEP), 1132-1312 (STSG…APPL), and 1340-1461 (FGVL…PPRY). T723 is modified (phosphothreonine). Position 730 is a phosphoserine (S730). A Phosphothreonine modification is found at T732. Polar residues predominate over residues 742–752 (PTSSSVDTMSL). Phosphoserine occurs at positions 758 and 762. The segment covering 758 to 768 (SPGSSTPSSTR) has biased composition (low complexity). T763 is modified (phosphothreonine). 8 positions are modified to phosphoserine: S769, S817, S826, S900, S909, S928, S965, and S976. Residues 927–954 (RSPSPSKNDSFFTPDSNHNSLSQSTTGH) show a composition bias toward polar residues. Residues 1031–1055 (SKGTPSDGVSLSNLTQPSLTATDQQ) are compositionally biased toward polar residues. Residues S1068 and S1099 each carry the phosphoserine modification. The span at 1141-1150 (GPSSASELAS) shows a compositional bias: low complexity. The segment covering 1151 to 1160 (LGGGGSGGLT) has biased composition (gly residues). Positions 1174–1189 (FQESVGSFRSNSFNST) are enriched in polar residues. Pro residues-rich tracts occupy residues 1267 to 1277 (FPTPPPPPPPG) and 1290 to 1299 (STPPPPPPPV). Position 1366 is an asymmetric dimethylarginine (R1366). Positions 1382–1391 (PHGGGGGGGS) are enriched in gly residues. The span at 1417–1434 (PRPDFRPREPFLSRDPFH) shows a compositional bias: basic and acidic residues. Asymmetric dimethylarginine occurs at positions 1424 and 1430.

In terms of assembly, associates with the RNA polymerase II complex.

The polypeptide is Regulation of nuclear pre-mRNA domain-containing protein 2 (RPRD2) (Homo sapiens (Human)).